The primary structure comprises 1754 residues: Collagen alpha-1(XVIII) chain (1754 aa).

Residues 1 to 23 form the signal peptide; that stretch reads MAPYPCGCHILLLLFCCLAAARA. The tract at residues 42–104 is disordered; the sequence is ATTIPEPQGP…TSAESPDAPE (63 aa). Positions 57–73 are enriched in polar residues; it reads TADTTTHVTPRNGSTEP. 3 N-linked (GlcNAc...) asparagine glycosylation sites follow: Asn-68, Asn-129, and Asn-164. Residues 152–256 are disordered; the sequence is LALAGPSSTP…APSQQLQRPD (105 aa). Polar residues predominate over residues 157–169; the sequence is PSSTPQENGTTLW. The segment covering 215 to 253 has biased composition (low complexity); it reads SGRASLSSLLGGAPPWGSLQDPDSQGLSPAAAAPSQQLQ. An FZ domain is found at 329–446; it reads APAGRCLPLP…TQEDGYCVLI (118 aa). Disulfide bonds link Cys-334/Cys-397, Cys-344/Cys-390, Cys-381/Cys-419, Cys-408/Cys-443, and Cys-412/Cys-432. One can recognise a Laminin G-like domain in the interval 456–644; sequence EVGLLQLLGD…IAELKVRRDP (189 aa). The interval 645 to 751 is nonhelical region 1 (NC1); it reads QVSPMHCLDE…RTPGGRVKEG (107 aa). Positions 645–1443 are disordered; it reads QVSPMHCLDE…GPPGTMGASS (799 aa). The span at 672–681 shows a compositional bias: basic and acidic residues; sequence DARELLREET. Thr-696 carries the post-translational modification Phosphothreonine. The span at 717 to 738 shows a compositional bias: polar residues; that stretch reads QTTVASLGAQTLPGSDSVSTWD. The tract at residues 752–785 is triple-helical region 1 (COL1); sequence GLKGQKGEPGVPGPPGRAGPPGSPCLPGPPGLPC. The span at 762-789 shows a compositional bias: pro residues; sequence VPGPPGRAGPPGSPCLPGPPGLPCPVSP. Residues 786–795 are nonhelical region 2 (NC2); the sequence is PVSPLGPAGP. Residues 796 to 875 form a triple-helical region 2 (COL2) region; it reads ALQTVPGPQG…QGPPGPPGPS (80 aa). Basic and acidic residues predominate over residues 815–831; that stretch reads TPGRDGEPGDPGEDGKP. A compositionally biased stretch (low complexity) spans 833 to 846; it reads DTGPQGFPGTPGDV. Residues 862-874 show a composition bias toward pro residues; sequence PPGPQGPPGPPGP. Positions 876–899 are nonhelical region 3 (NC3); it reads FRHDKLTFIDMEGSGFGGDLEALR. The O-linked (Xyl...) (chondroitin sulfate) serine glycan is linked to Ser-889. The interval 900–1021 is triple-helical region 3 (COL3); it reads GPRGFPGPPG…PGPPGPPGPG (122 aa). Residues 904–914 are compositionally biased toward pro residues; it reads FPGPPGPPGVP. Asn-926 is a glycosylation site (N-linked (GlcNAc...) asparagine). Over residues 930 to 942 the composition is skewed to low complexity; sequence VPGPAGLPGVPGR. Residues 946 to 961 show a composition bias toward pro residues; it reads PGFPGLPGPPGPPGRE. Over residues 976 to 1003 the composition is skewed to low complexity; that stretch reads AGAPGHKGSKGAPGPAGARGESGLAGAP. The segment covering 1005–1021 has biased composition (pro residues); sequence PAGPPGPPGPPGPPGPG. The nonhelical region 4 (NC4) stretch occupies residues 1022–1044; that stretch reads LPAGFDDMEGSGGPFWSTARSAD. Residues 1045-1127 form a triple-helical region 4 (COL4) region; the sequence is GPQGPPGLPG…PGPPGPPGPV (83 aa). The span at 1053-1065 shows a compositional bias: low complexity; sequence PGLKGDPGVPGLP. Basic and acidic residues predominate over residues 1095 to 1109; it reads KGDRGSRGEKGDPGK. The span at 1117–1126 shows a compositional bias: pro residues; sequence LPGPPGPPGP. The tract at residues 1128–1141 is nonhelical region 5 (NC5); sequence VYVSEQDGSVLSVP. Residues 1141-1153 are compositionally biased toward low complexity; sequence PGPEGRPGFAGFP. The tract at residues 1142–1183 is triple-helical region 5 (COL5); sequence GPEGRPGFAGFPGPAGPKGNLGSKGERGSPGPKGEKGEPGSI. Positions 1184-1196 are nonhelical region 6 (NC6); it reads FSPDGGALGPAQK. The interval 1197-1269 is triple-helical region 6 (COL6); it reads GAKGEPGFRG…PGPPGPPGTP (73 aa). The span at 1254–1268 shows a compositional bias: pro residues; it reads PGPPGPPGPPGPPGT. The nonhelical region 7 (NC7) stretch occupies residues 1270–1279; sequence VYDSNVFAES. The tract at residues 1280–1312 is triple-helical region 7 (COL7); it reads SRPGPPGLPGNQGPPGPKGAKGEVGPPGPPGQF. The span at 1282 to 1296 shows a compositional bias: pro residues; that stretch reads PGPPGLPGNQGPPGP. The interval 1313-1324 is nonhelical region 8 (NC8); that stretch reads PFDFLQLEAEMK. Positions 1321–1341 are enriched in basic and acidic residues; that stretch reads AEMKGEKGDRGDAGQKGERGE. The triple-helical region 8 (COL8) stretch occupies residues 1325-1346; the sequence is GEKGDRGDAGQKGERGEPGGGG. The Cell attachment site signature appears at 1330 to 1332; sequence RGD. Positions 1347-1353 are nonhelical region 9 (NC9); it reads FFGSSLP. 3 stretches are compositionally biased toward pro residues: residues 1353–1365, 1401–1414, and 1424–1436; these read PGPP…PGPR, PPGP…PSFP, and PGPP…PGPP. Residues 1354–1411 are triple-helical region 9 (COL9); that stretch reads GPPGPPGPPGPRGYPGIPGPKGESIRGQPGPPGPQGPPGIGYEGRQGPPGPPGPPGPP. The tract at residues 1412–1424 is nonhelical region 10 (NC10); the sequence is SFPGPHRQTISVP. A triple-helical region 10 (COL10) region spans residues 1425 to 1442; sequence GPPGPPGPPGPPGTMGAS. Residues 1443–1754 form a nonhelical region 11 (NC11) region; that stretch reads SGVRLWATRQ…IENSFMTASK (312 aa). Positions 1456 to 1501 are non-collagenous domain 1 association domain; the sequence is GQVHEVPEGWLIFVAEQEELYVRVQNGFRKVQLEARTPLPRGTDNE. The interval 1502–1571 is non-collagenous domain 1 hinge region; that stretch reads VAALQPPVVQ…RPARPTSPPA (70 aa). The tract at residues 1511–1556 is disordered; it reads QLHDSNPYPRREHPHPTARPWRADDILASPPRLPEPQPYPGAPHHS. Residues 1519 to 1535 are compositionally biased toward basic and acidic residues; that stretch reads PRREHPHPTARPWRADD. Positions 1541-1551 are enriched in pro residues; that stretch reads PRLPEPQPYPG. A glycan (O-linked (GalNAc...) threonine) is linked at Thr-1567. Residues His-1572, His-1574, His-1582, and Asp-1647 each coordinate Zn(2+). Disulfide bonds link Cys-1604/Cys-1744 and Cys-1706/Cys-1736.

Belongs to the multiplexin collagen family. Forms homotrimers. Recombinant non-collagenous domain 1 has stronger affinity to NID1, HSPG2 and laminin-1:NID1 complex and lower affinity to FBLN1 and FBLN2 than endostatin. As to quaternary structure, monomeric. Interacts with KDR/VEGFR2. Interacts with the ITGA5:ITGB1 complex. Interacts with NID1, HSPG2, laminin-1:NID1 complex, FBLN1 and FBLN2. Post-translationally, prolines at the third position of the tripeptide repeating unit (G-X-Y) of the triple-helical regions are hydroxylated. Circulating endostatins are found as sialoglycoprotein and asialoglycoprotein structures. In terms of processing, undergoes proteolytic processing by CTSL/cathepsin-L and elastase-like proteases to generate both non-collagenous domain 1 trimers and endostatin monomers. In tissue extracts (brain, skeletal muscle, heart, kidney, testis and liver) predominantly bands of approximately 38 kDa are detected; recombinant non-collagenous domain 1 shows similar mobility. In vitro, several proteolytic cleavage sites in the non-collagenous domain 1 hinge region generating different endostatin-like peptides are reported. Detected in placenta (at protein level). Present in multiple organs with highest levels in liver, lung and kidney.

The protein resides in the secreted. The protein localises to the extracellular space. It localises to the extracellular matrix. It is found in the basement membrane. Its function is as follows. Probably plays a major role in determining the retinal structure as well as in the closure of the neural tube. In terms of biological role, may regulate extracellular matrix-dependent motility and morphogenesis of endothelial and non-endothelial cells; the function requires homotrimerization and implicates MAPK signaling. Functionally, potently inhibits endothelial cell proliferation and angiogenesis. May inhibit angiogenesis by binding to the heparan sulfate proteoglycans involved in growth factor signaling. Inhibits VEGFA-induced endothelial cell proliferation and migration. Seems to inhibit VEGFA-mediated signaling by blocking the interaction of VEGFA to its receptor KDR/VEGFR2. Modulates endothelial cell migration in an integrin-dependent manner implicating integrin ITGA5:ITGB1 and to a lesser extent ITGAV:ITGB3 and ITGAV:ITGB5. May negatively regulate the activity of homotrimeric non-collagenous domain 1. The chain is Collagen alpha-1(XVIII) chain from Homo sapiens (Human).